Reading from the N-terminus, the 112-residue chain is Iron-sulfur cluster assembly protein CyaY (112 aa).

This sequence belongs to the frataxin family.

Functionally, involved in iron-sulfur (Fe-S) cluster assembly. May act as a regulator of Fe-S biogenesis. The polypeptide is Iron-sulfur cluster assembly protein CyaY (Janthinobacterium sp. (strain Marseille) (Minibacterium massiliensis)).